A 154-amino-acid polypeptide reads, in one-letter code: Lipoprotein signal peptidase (154 aa).

3 helical membrane passes run 4-24, 62-82, and 84-104; these read IIIP…KLWI, LFTL…MKHI, and GSYW…GNFI. Residues Asp-114 and Asp-130 contribute to the active site. A helical membrane pass occupies residues 125–145; that stretch reads IFNVADSYLTIGIICLMIALW.

This sequence belongs to the peptidase A8 family.

It localises to the cell membrane. It carries out the reaction Release of signal peptides from bacterial membrane prolipoproteins. Hydrolyzes -Xaa-Yaa-Zaa-|-(S,diacylglyceryl)Cys-, in which Xaa is hydrophobic (preferably Leu), and Yaa (Ala or Ser) and Zaa (Gly or Ala) have small, neutral side chains.. Its pathway is protein modification; lipoprotein biosynthesis (signal peptide cleavage). Its function is as follows. This protein specifically catalyzes the removal of signal peptides from prolipoproteins. In Streptococcus agalactiae serotype Ia (strain ATCC 27591 / A909 / CDC SS700), this protein is Lipoprotein signal peptidase.